Reading from the N-terminus, the 92-residue chain is Small ribosomal subunit protein bS18 (92 aa).

The segment at 1-27 (MTQQSNSADRKPRGKGPKRPRKPKVDP) is disordered. Basic residues predominate over residues 12–22 (PRGKGPKRPRK).

The protein belongs to the bacterial ribosomal protein bS18 family. Part of the 30S ribosomal subunit. Forms a tight heterodimer with protein bS6.

Its function is as follows. Binds as a heterodimer with protein bS6 to the central domain of the 16S rRNA, where it helps stabilize the platform of the 30S subunit. This Deinococcus deserti (strain DSM 17065 / CIP 109153 / LMG 22923 / VCD115) protein is Small ribosomal subunit protein bS18.